A 320-amino-acid chain; its full sequence is Aristolochene synthase (320 aa).

Over residues 1–14 (MKKPNGTNGASSSL) the composition is skewed to polar residues. Residues 1–20 (MKKPNGTNGASSSLEPPPST) form a disordered region. Positions 90, 219, 223, and 227 each coordinate Mg(2+). (2E,6E)-farnesyl diphosphate contacts are provided by R314 and Y315.

It belongs to the terpene synthase family. Homodimer. Requires Mg(2+) as cofactor.

It catalyses the reaction (2E,6E)-farnesyl diphosphate = (+)-aristolochene + diphosphate. The protein operates within sesquiterpene biosynthesis; aristolochene biosynthesis; aristolochene from farnesyl diphosphate: step 1/1. In terms of biological role, catalyzes the cyclization of trans,trans-farnesyl diphosphate (FPP) to the bicyclic sesquiterpene aristolochene. Produces germacrene A as an enzyme-bound intermediate that is not released by the enzyme, but is further cyclized to produce aristolochene. Aristolochene is the likely parent compound for a number of sesquiterpenoid toxins produced by filamentous fungi. The sequence is that of Aristolochene synthase (Ari1) from Aspergillus terreus.